The primary structure comprises 1152 residues: Autotransporter adhesin BpaC (1152 aa).

Positions 1–71 (MNRIFKSIWC…PFAEEAMAAN (71 aa)) are cleaved as a signal peptide. Positions 72–1061 (NAGVCLTYNG…VGQLNSAVSG (990 aa)) are surface exposed passenger domain. Disordered stretches follow at residues 420–886 (GLQG…AGAT) and 900–949 (TATG…ESAA). The segment covering 427-442 (ANTGTASGDNSTASGD) has biased composition (polar residues). The span at 443–504 (NATASGTNST…ANGTNSTASG (62 aa)) shows a compositional bias: low complexity. Polar residues predominate over residues 505–519 (DNSTASGTNASATGE). The span at 520–588 (NSTATGTDST…ANGTNSTASG (69 aa)) shows a compositional bias: low complexity. Over residues 589–603 (DNSTASGTNASATGE) the composition is skewed to polar residues. Low complexity predominate over residues 604–630 (NSTATGTDSTASGSNSTANGTNSTASG). Over residues 631 to 645 (DNSTASGTNASATGE) the composition is skewed to polar residues. Residues 646-672 (NSTATGTDSTASGSNSTANGTNSTASG) are compositionally biased toward low complexity. Over residues 673–687 (DNSTASGTNASATGE) the composition is skewed to polar residues. The span at 688–714 (NSTATGTDSTASGSNSTANGTNSTASG) shows a compositional bias: low complexity. A compositionally biased stretch (polar residues) spans 715 to 729 (DNSTASGTNASATGE). The span at 730-756 (NSTATGTDSTASGSNSTANGANSTASG) shows a compositional bias: low complexity. Over residues 757–771 (DNSTASGTNASATGE) the composition is skewed to polar residues. Low complexity-rich tracts occupy residues 772–840 (NSTA…TASG) and 848–886 (TNASATGENSTATGTASTASGSNSTANGANSTASGAGAT). An outer membrane translocation of the passenger domain region spans residues 1062 to 1099 (IRNQMDGMQGQIDTLARDAYSGIAAATALTMIPDVDPG). Positions 1100-1152 (KTLAVGIGTANFKGYQASALGATARITQNLKVKTGVSYSGSNYVWGAGMSYQW) are translocator domain.

The protein belongs to the autotransporter-2 (AT-2) (TC 1.B.40) family. As to quaternary structure, homotrimer.

The protein localises to the cell surface. The protein resides in the cell outer membrane. Functionally, involved in virulence. Mediates adherence to human respiratory epithelial cells. This is Autotransporter adhesin BpaC from Burkholderia pseudomallei (strain 1026b).